The following is a 189-amino-acid chain: MNPEMIMEMMNSDIAKEMAPKMMPKMMPLALEKFLQYIPENERKEFIARIVDIIVSKDENKEVSAEYLDMFEALLNVKGLKIHSRGGKGAIKEKISPMDLFLAGLCGCVCIAVGNTLKANNIDAEIKVDGKVEKSFEEGKIKKVIINIYVKVDGDIDKEKLKKLVLEGSKKCLISNSISCEIEKNVILE.

This sequence belongs to the OsmC/Ohr family.

This is an uncharacterized protein from Methanocaldococcus jannaschii (strain ATCC 43067 / DSM 2661 / JAL-1 / JCM 10045 / NBRC 100440) (Methanococcus jannaschii).